Consider the following 265-residue polypeptide: Phosphate import ATP-binding protein PstB 1 (265 aa).

The 241-residue stretch at 20-260 (LSTNDLSVLY…PKGKITEDYI (241 aa)) folds into the ABC transporter domain. 53 to 60 (GASGSGKS) serves as a coordination point for ATP.

The protein belongs to the ABC transporter superfamily. Phosphate importer (TC 3.A.1.7) family. As to quaternary structure, the complex is composed of two ATP-binding proteins (PstB), two transmembrane proteins (PstC and PstA) and a solute-binding protein (PstS).

It is found in the cell membrane. The enzyme catalyses phosphate(out) + ATP + H2O = ADP + 2 phosphate(in) + H(+). Part of the ABC transporter complex PstSACB involved in phosphate import. Responsible for energy coupling to the transport system. The chain is Phosphate import ATP-binding protein PstB 1 from Lactobacillus acidophilus (strain ATCC 700396 / NCK56 / N2 / NCFM).